The primary structure comprises 695 residues: Elongation factor G 2 (695 aa).

In terms of domain architecture, tr-type G spans 5–280 (SKYRNIGIFA…AVVDYLPSPT (276 aa)). Residues 14-21 (AHVDAGKT), 78-82 (DTPGH), and 132-135 (NKLD) each bind GTP.

The protein belongs to the TRAFAC class translation factor GTPase superfamily. Classic translation factor GTPase family. EF-G/EF-2 subfamily.

It is found in the cytoplasm. Catalyzes the GTP-dependent ribosomal translocation step during translation elongation. During this step, the ribosome changes from the pre-translocational (PRE) to the post-translocational (POST) state as the newly formed A-site-bound peptidyl-tRNA and P-site-bound deacylated tRNA move to the P and E sites, respectively. Catalyzes the coordinated movement of the two tRNA molecules, the mRNA and conformational changes in the ribosome. The sequence is that of Elongation factor G 2 from Vibrio vulnificus (strain YJ016).